Here is a 229-residue protein sequence, read N- to C-terminus: Germin-like protein 12-2 (229 aa).

The first 22 residues, 1 to 22 (MASSNFFLLTALIALVATQAMA), serve as a signal peptide directing secretion. A disulfide bridge links Cys-32 with Cys-47. The 156-residue stretch at 62 to 217 (ANLDKPMDTT…AFQVDKKAVD (156 aa)) folds into the Cupin type-1 domain. Asn-78 carries N-linked (GlcNAc...) asparagine glycosylation. Positions 111, 113, 118, and 162 each coordinate Mn(2+).

It belongs to the germin family. In terms of assembly, oligomer (believed to be a pentamer but probably hexamer).

It is found in the secreted. It localises to the extracellular space. The protein resides in the apoplast. May play a role in plant defense. Probably has no oxalate oxidase activity even if the active site is conserved. In Oryza sativa subsp. japonica (Rice), this protein is Germin-like protein 12-2.